Consider the following 453-residue polypeptide: Homogentisate 1,2-dioxygenase (453 aa).

The Proton acceptor role is filled by H306. Residues H349 and E355 each coordinate Fe cation. Homogentisate-binding residues include Y364 and H385. Fe cation is bound at residue H385.

Belongs to the homogentisate dioxygenase family. In terms of assembly, hexamer; dimer of trimers. Fe cation serves as cofactor.

The enzyme catalyses homogentisate + O2 = 4-maleylacetoacetate + H(+). The protein operates within amino-acid degradation; L-phenylalanine degradation; acetoacetate and fumarate from L-phenylalanine: step 4/6. Functionally, involved in the catabolism of homogentisate (2,5-dihydroxyphenylacetate or 2,5-OH-PhAc), a central intermediate in the degradation of phenylalanine and tyrosine. Catalyzes the oxidative ring cleavage of the aromatic ring of homogentisate to yield maleylacetoacetate. This Rhizobium johnstonii (strain DSM 114642 / LMG 32736 / 3841) (Rhizobium leguminosarum bv. viciae) protein is Homogentisate 1,2-dioxygenase.